The chain runs to 718 residues: Neutral ceramidase B (718 aa).

Residues 1–20 (MINSFKKLIILISLVIILLS) form the signal peptide. 2 N-linked (GlcNAc...) asparagine glycosylation sites follow: Asn-224 and Asn-252. Ser-298 (nucleophile) is an active-site residue. N-linked (GlcNAc...) asparagine glycans are attached at residues Asn-358, Asn-378, Asn-391, Asn-421, Asn-422, Asn-577, Asn-610, and Asn-614.

This sequence belongs to the neutral ceramidase family.

It is found in the secreted. It carries out the reaction an N-acylsphing-4-enine + H2O = sphing-4-enine + a fatty acid. In terms of biological role, hydrolyzes the sphingolipid ceramide into sphingosine and free fatty acid. The protein is Neutral ceramidase B (dcd2B) of Dictyostelium discoideum (Social amoeba).